The chain runs to 202 residues: Succinate dehydrogenase cytochrome b558 subunit (202 aa).

The next 5 helical transmembrane spans lie at 12 to 31, 60 to 79, 93 to 113, 135 to 155, and 178 to 196; these read LHSL…HLVV, IFII…YIAF, NWLF…VSWH, ILSS…TIFH, and ISTY…VGLK. 4 residues coordinate heme: H28, H70, H113, and H155.

This sequence belongs to the cytochrome b558 family. Part of an enzyme complex containing three subunits: a flavoprotein, an iron-sulfur protein and cytochrome b-558.

Its subcellular location is the cell membrane. The protein operates within carbohydrate metabolism; tricarboxylic acid cycle. In terms of biological role, di-heme cytochrome of the succinate dehydrogenase complex. This chain is Succinate dehydrogenase cytochrome b558 subunit (sdhC), found in Bacillus subtilis (strain 168).